We begin with the raw amino-acid sequence, 298 residues long: Lipoyl synthase 1 (298 aa).

[4Fe-4S] cluster is bound by residues Cys34, Cys39, Cys45, Cys60, Cys64, Cys67, and Ser274. One can recognise a Radical SAM core domain in the interval 46–263; that stretch reads FKAGTATFLI…RRAGEGMGFL (218 aa). Positions 277 to 298 are disordered; the sequence is AEQVQRLMRSHPRTPKNQHSPE.

This sequence belongs to the radical SAM superfamily. Lipoyl synthase family. The cofactor is [4Fe-4S] cluster.

It is found in the cytoplasm. The enzyme catalyses [[Fe-S] cluster scaffold protein carrying a second [4Fe-4S](2+) cluster] + N(6)-octanoyl-L-lysyl-[protein] + 2 oxidized [2Fe-2S]-[ferredoxin] + 2 S-adenosyl-L-methionine + 4 H(+) = [[Fe-S] cluster scaffold protein] + N(6)-[(R)-dihydrolipoyl]-L-lysyl-[protein] + 4 Fe(3+) + 2 hydrogen sulfide + 2 5'-deoxyadenosine + 2 L-methionine + 2 reduced [2Fe-2S]-[ferredoxin]. Its pathway is protein modification; protein lipoylation via endogenous pathway; protein N(6)-(lipoyl)lysine from octanoyl-[acyl-carrier-protein]: step 2/2. Catalyzes the radical-mediated insertion of two sulfur atoms into the C-6 and C-8 positions of the octanoyl moiety bound to the lipoyl domains of lipoate-dependent enzymes, thereby converting the octanoylated domains into lipoylated derivatives. This is Lipoyl synthase 1 from Gloeobacter violaceus (strain ATCC 29082 / PCC 7421).